The chain runs to 231 residues: Large ribosomal subunit protein uL1 (231 aa).

The protein belongs to the universal ribosomal protein uL1 family. As to quaternary structure, part of the 50S ribosomal subunit.

Its function is as follows. Binds directly to 23S rRNA. The L1 stalk is quite mobile in the ribosome, and is involved in E site tRNA release. Functionally, protein L1 is also a translational repressor protein, it controls the translation of the L11 operon by binding to its mRNA. The chain is Large ribosomal subunit protein uL1 from Verminephrobacter eiseniae (strain EF01-2).